Reading from the N-terminus, the 696-residue chain is C2 domain-containing protein 2 (696 aa).

A helical membrane pass occupies residues 13 to 33; that stretch reads AQWLALVSLFVAALATVGLYL. The SMP-LBD domain maps to 51 to 242; that stretch reads EPGEGPRPGS…PTTVKEAQNL (192 aa). The residue at position 60 (serine 60) is a Phosphoserine. Residues 245–362 enclose the C2 domain; sequence AASTAQESCP…KKQPSGPQSF (118 aa). Phosphoserine is present on residues serine 435 and serine 441. Residue threonine 445 is modified to Phosphothreonine. The interval 539 to 580 is disordered; that stretch reads VDSTHQEDAPSHPERAAASAPPEEAESAQASLAPKPQEDELD. Over residues 542–553 the composition is skewed to basic and acidic residues; it reads THQEDAPSHPER. Over residues 554–572 the composition is skewed to low complexity; sequence AAASAPPEEAESAQASLAP. Serine 581 is modified (phosphoserine).

The protein localises to the membrane. The sequence is that of C2 domain-containing protein 2 (C2CD2) from Homo sapiens (Human).